We begin with the raw amino-acid sequence, 1329 residues long: Putative protein tag-53 (1329 aa).

The EGF-like 1 domain maps to 65–92 (SCDKPCYNGVCLNKACVCSKGWYGSQCD). Cystine bridges form between Cys-66-Cys-75, Cys-70-Cys-80, Cys-82-Cys-91, Cys-94-Cys-120, and Cys-144-Cys-166. One can recognise a CUB domain in the interval 94–203 (CFGRIRISDN…NGFNVSYESN (110 aa)). Asn-103 carries N-linked (GlcNAc...) asparagine glycosylation. Residues Asn-197 and Asn-208 are each glycosylated (N-linked (GlcNAc...) asparagine). EGF-like domains are found at residues 204–232 (RCAY…LNCE) and 235–270 (VCQL…ETCQ). 6 disulfides stabilise this stretch: Cys-205-Cys-215, Cys-209-Cys-220, Cys-222-Cys-231, Cys-236-Cys-252, Cys-247-Cys-257, and Cys-259-Cys-269. Kelch repeat units lie at residues 302–353 (VVWS…KYKN), 355–408 (LYMF…VAGH), 416–463 (EMFV…AVEY), 471–518 (AILV…YLNG), 520–575 (MVVV…VIGQ), and 577–619 (LYAL…KCVF). 6 N-linked (GlcNAc...) asparagine glycosylation sites follow: Asn-324, Asn-395, Asn-447, Asn-481, Asn-529, and Asn-555. A glycan (N-linked (GlcNAc...) asparagine) is linked at Asn-820. A glycan (N-linked (GlcNAc...) asparagine; atypical) is linked at Asn-832. N-linked (GlcNAc...) asparagine glycosylation is found at Asn-833 and Asn-934. Cystine bridges form between Cys-945–Cys-953, Cys-947–Cys-968, Cys-971–Cys-980, Cys-983–Cys-997, Cys-1000–Cys-1009, Cys-1002–Cys-1016, Cys-1018–Cys-1028, and Cys-1031–Cys-1045. Laminin EGF-like domains lie at 945–999 (CQCN…VCSP) and 1000–1047 (CDCH…PCFY). The EGF-like 4 domain maps to 952–998 (TCFTSVGSFPPVTIEKCQSCQNHTTGAHCERCAPGFYGDARNGGVCS). N-linked (GlcNAc...) asparagine glycosylation occurs at Asn-973. Residues Asn-1066, Asn-1102, and Asn-1147 are each glycosylated (N-linked (GlcNAc...) asparagine). A helical transmembrane segment spans residues 1176–1196 (VLFFVIFAACFIVLLVVAGLL). Residues 1197 to 1329 (WMIKVRIEAY…TIRQRPNNND (133 aa)) lie on the Cytoplasmic side of the membrane.

The protein localises to the membrane. The polypeptide is Putative protein tag-53 (tag-53) (Caenorhabditis elegans).